We begin with the raw amino-acid sequence, 365 residues long: Flavone synthase (365 aa).

Histidine 76, histidine 218, aspartate 220, and histidine 276 together coordinate Fe cation. In terms of domain architecture, Fe2OG dioxygenase spans 194–295; it reads MEQKVLINYY…RLSIATFQNP (102 aa). Positions 345–365 are disordered; the sequence is RLQDEKAKLEMKSKSADENLA.

The protein belongs to the iron/ascorbate-dependent oxidoreductase family. Fe cation serves as cofactor. It depends on L-ascorbate as a cofactor.

It localises to the cytoplasm. The catalysed reaction is a flavanone + 2-oxoglutarate + O2 = a flavone + succinate + CO2 + H2O. It participates in secondary metabolite biosynthesis; flavonoid biosynthesis. Functionally, involved in the conversion of naringenin to apigenin. Acts via a direct 2,3-desaturation of flavanones instead of a sequential hydroxylation/dehydratation mechanism. In Petroselinum crispum (Parsley), this protein is Flavone synthase (FNSI).